The following is a 212-amino-acid chain: Glycerol-3-phosphate acyltransferase (212 aa).

Transmembrane regions (helical) follow at residues 8–28 (IFLSAALIALAYLIGSIPFAV), 59–79 (AAAALTLLGDAFKGWFALWLA), 90–110 (VFALVALAAFLGHLYPVFLGF), 122–142 (ILLAIHPGLALATAATWVIIA), 148–168 (SSLAALVAAFFAPVYYLFGSG), and 169–189 (VAWYAQGPVGVALAIITLLLF).

It belongs to the PlsY family. As to quaternary structure, probably interacts with PlsX.

Its subcellular location is the cell inner membrane. The enzyme catalyses an acyl phosphate + sn-glycerol 3-phosphate = a 1-acyl-sn-glycero-3-phosphate + phosphate. It participates in lipid metabolism; phospholipid metabolism. Functionally, catalyzes the transfer of an acyl group from acyl-phosphate (acyl-PO(4)) to glycerol-3-phosphate (G3P) to form lysophosphatidic acid (LPA). This enzyme utilizes acyl-phosphate as fatty acyl donor, but not acyl-CoA or acyl-ACP. The sequence is that of Glycerol-3-phosphate acyltransferase from Bordetella petrii (strain ATCC BAA-461 / DSM 12804 / CCUG 43448).